The chain runs to 389 residues: Succinate--CoA ligase [ADP-forming] subunit beta (389 aa).

ATP contacts are provided by residues lysine 46, 53 to 55, glutamate 99, cysteine 102, and glutamate 107; that span reads GRG. Positions 199 and 213 each coordinate Mg(2+). Substrate is bound by residues asparagine 264 and 321–323; that span reads GIV.

This sequence belongs to the succinate/malate CoA ligase beta subunit family. As to quaternary structure, heterotetramer of two alpha and two beta subunits. Mg(2+) serves as cofactor.

The catalysed reaction is succinate + ATP + CoA = succinyl-CoA + ADP + phosphate. It catalyses the reaction GTP + succinate + CoA = succinyl-CoA + GDP + phosphate. Its pathway is carbohydrate metabolism; tricarboxylic acid cycle; succinate from succinyl-CoA (ligase route): step 1/1. Its function is as follows. Succinyl-CoA synthetase functions in the citric acid cycle (TCA), coupling the hydrolysis of succinyl-CoA to the synthesis of either ATP or GTP and thus represents the only step of substrate-level phosphorylation in the TCA. The beta subunit provides nucleotide specificity of the enzyme and binds the substrate succinate, while the binding sites for coenzyme A and phosphate are found in the alpha subunit. The chain is Succinate--CoA ligase [ADP-forming] subunit beta from Haemophilus influenzae (strain PittEE).